Reading from the N-terminus, the 457-residue chain is MPKVQADGLPLPQRYGAILTIVIGISMAVLDGAIANVALPTIATDLHATPASSIWVVNAYQIAIVISLLSFSFLGDMFGYRRIYKCGLVVFLLSSLFCALSDSLQMLTLARVIQGFGGAALMSVNTALIRLIYPQRFLGRGMGINSFIVAVSSAAGPTIAAAILSIASWKWLFLINVPLGIIALLLAMRFLPPNGSRASKPRFDLPSAVMNALTFGLLITALSGFAQGQSLTLIAAELVVMVVVGIFFIRRQLSLPVPLLPVDLLRIPLFSLSICTSVCSFCAQMLAMVSLPFYLQTVLGRSEVETGLLLTPWPLATMVMAPLAGYLIERVHAGLLGALGLFIMAAGLFSLVLLPASPADINIIWPMILCGAGFGLFQSPNNHTIITSAPRERSGGASGMLGTARLLGQSSGAALVALMLNQFGDNGTHVSLMAAAILAVIAACVSGLRITQPRSRA.

Helical transmembrane passes span 15 to 35, 54 to 74, 87 to 107, 112 to 132, 144 to 164, 166 to 186, 205 to 225, 229 to 249, 269 to 289, 308 to 328, 334 to 354, 357 to 377, 400 to 420, and 428 to 448; these read YGAILTIVIGISMAVLDGAIA, IWVVNAYQIAIVISLLSFSFL, GLVVFLLSSLFCALSDSLQML, VIQGFGGAALMSVNTALIRLI, INSFIVAVSSAAGPTIAAAIL, IASWKWLFLINVPLGIIALLL, LPSAVMNALTFGLLITALSGF, QSLTLIAAELVVMVVVGIFFI, LFSLSICTSVCSFCAQMLAMV, LLLTPWPLATMVMAPLAGYLI, GLLGALGLFIMAAGLFSLVLL, SPADINIIWPMILCGAGFGLF, MLGTARLLGQSSGAALVALML, and THVSLMAAAILAVIAACVSGL.

This sequence belongs to the major facilitator superfamily. TCR/Tet family.

It localises to the cell inner membrane. This is an uncharacterized protein from Escherichia coli (strain K12).